Here is a 216-residue protein sequence, read N- to C-terminus: Uracil phosphoribosyltransferase (216 aa).

5-phospho-alpha-D-ribose 1-diphosphate is bound by residues Arg84, Arg109, and Asp137 to Thr145. Residues Ile202 and Gly207 to Ala209 contribute to the uracil site. Asp208 serves as a coordination point for 5-phospho-alpha-D-ribose 1-diphosphate.

This sequence belongs to the UPRTase family. Mg(2+) is required as a cofactor.

The catalysed reaction is UMP + diphosphate = 5-phospho-alpha-D-ribose 1-diphosphate + uracil. It functions in the pathway pyrimidine metabolism; UMP biosynthesis via salvage pathway; UMP from uracil: step 1/1. Its activity is regulated as follows. Allosterically activated by GTP. Functionally, catalyzes the conversion of uracil and 5-phospho-alpha-D-ribose 1-diphosphate (PRPP) to UMP and diphosphate. The polypeptide is Uracil phosphoribosyltransferase (Synechocystis sp. (strain ATCC 27184 / PCC 6803 / Kazusa)).